The primary structure comprises 156 residues: MALVLAAAGAVTVVQFRDAAHEADPDGALRGLTDDITADLVRELVTILPIVLVIAAVAAYLLSRAALRPVDRIRAAAQTLTTTPHPDTDAPLPVPPTDDEIAWLATTLNTMLTRLQRALAHEQQFVADASHELRTPLALLTTELELRCAGPDPPTS.

At 1-42 (MALVLAAAGAVTVVQFRDAAHEADPDGALRGLTDDITADLVR) the chain is on the extracellular side. A helical membrane pass occupies residues 43-63 (ELVTILPIVLVIAAVAAYLLS). The 57-residue stretch at 64-120 (RAALRPVDRIRAAAQTLTTTPHPDTDAPLPVPPTDDEIAWLATTLNTMLTRLQRALA) folds into the HAMP domain. Topologically, residues 64-156 (RAALRPVDRI…RCAGPDPPTS (93 aa)) are cytoplasmic. In terms of domain architecture, Histidine kinase; first part spans 128-156 (DASHELRTPLALLTTELELRCAGPDPPTS). His-131 is modified (phosphohistidine; by autocatalysis).

Homodimer. Each monomer interacts with HK1 and the receiver domain of TcrA. Phosphorylated by HK1.

The protein localises to the cell membrane. The enzyme catalyses ATP + protein L-histidine = ADP + protein N-phospho-L-histidine.. Its function is as follows. Member of the three-protein two-component system HK1/HK2/TcrA. HK2 transfers its phosphoryl group to TcrA. The protein is Sensor histidine kinase component HK2 of Mycobacterium tuberculosis (strain ATCC 25618 / H37Rv).